We begin with the raw amino-acid sequence, 307 residues long: NAD kinase 1 (307 aa).

Residue aspartate 67 is the Proton acceptor of the active site. Residues 67–68 (DG), 149–150 (NE), arginine 160, aspartate 181, and 192–197 (TCYTSS) contribute to the NAD(+) site.

It belongs to the NAD kinase family. A divalent metal cation serves as cofactor.

It localises to the cytoplasm. The enzyme catalyses NAD(+) + ATP = ADP + NADP(+) + H(+). Involved in the regulation of the intracellular balance of NAD and NADP, and is a key enzyme in the biosynthesis of NADP. Catalyzes specifically the phosphorylation on 2'-hydroxyl of the adenosine moiety of NAD to yield NADP. Essential for photoheterotrophic growth. Has a significant function in the oxidative pentose phosphate (OPP) pathway for glucose catabolism under photoheterotrophic conditions. Is also involved in cellular redox homeostasis. The polypeptide is NAD kinase 1 (Synechocystis sp. (strain ATCC 27184 / PCC 6803 / Kazusa)).